A 175-amino-acid chain; its full sequence is RNA pyrophosphohydrolase (175 aa).

A Nudix hydrolase domain is found at 6-149; it reads GYRPNVGIIL…KRQVYQQALT (144 aa). The Nudix box signature appears at 38 to 59; it reads GGIKHGESPEQAMYRELYEEVG.

Belongs to the Nudix hydrolase family. RppH subfamily. The cofactor is a divalent metal cation.

In terms of biological role, accelerates the degradation of transcripts by removing pyrophosphate from the 5'-end of triphosphorylated RNA, leading to a more labile monophosphorylated state that can stimulate subsequent ribonuclease cleavage. The chain is RNA pyrophosphohydrolase from Azoarcus sp. (strain BH72).